The sequence spans 183 residues: UPF0398 protein LSL_0930 (183 aa).

Belongs to the UPF0398 family.

This chain is UPF0398 protein LSL_0930, found in Ligilactobacillus salivarius (strain UCC118) (Lactobacillus salivarius).